The following is a 60-amino-acid chain: Acrosin (60 aa).

Asn3 carries an N-linked (GlcNAc...) asparagine glycan. One can recognise a Peptidase S1 domain in the interval 24–60 (IIGGQDAAHGSWPWMVSLQIFTYHNNRRYHVCGGSLL).

The protein belongs to the peptidase S1 family. Heavy chain (catalytic) and a light chain linked by two disulfide bonds. Forms a heterodimer with SERPINA5.

It catalyses the reaction Preferential cleavage: Arg-|-Xaa, Lys-|-Xaa.. Inhibited by SERPINA5. Its function is as follows. Acrosin is the major protease of mammalian spermatozoa. It is a serine protease of trypsin-like cleavage specificity, it is synthesized in a zymogen form, proacrosin and stored in the acrosome. This is Acrosin (ACR) from Capra hircus (Goat).